A 29-amino-acid polypeptide reads, in one-letter code: Cyclotide mden-F (29 aa).

Residues 1–29 (GLPICGETCFFGKCNTPKCTCINPICYKN) constitute a cross-link (cyclopeptide (Gly-Asn)). 3 disulfide bridges follow: Cys5-Cys19, Cys9-Cys21, and Cys14-Cys26.

Belongs to the cyclotide family. Post-translationally, this is a cyclic peptide.

In terms of biological role, probably participates in a plant defense mechanism. The chain is Cyclotide mden-F from Melicytus dentatus (Tree violet).